Here is a 235-residue protein sequence, read N- to C-terminus: Regulator of G-protein signaling 18 (235 aa).

S49 bears the Phosphoserine mark. In terms of domain architecture, RGS spans 86-202 (SFDKLLSHRD…LKSEIYLHLI (117 aa)). 2 positions are modified to phosphoserine: S216 and S218.

It localises to the cytoplasm. Functionally, inhibits signal transduction by increasing the GTPase activity of G protein alpha subunits thereby driving them into their inactive GDP-bound form. Binds to G(i) alpha-1, G(i) alpha-2, G(i) alpha-3 and G(q) alpha. This chain is Regulator of G-protein signaling 18 (Rgs18), found in Rattus norvegicus (Rat).